Consider the following 195-residue polypeptide: MSEVTGDGAVAAEAIDPRRFRTVLGQFCTGVTIITTIDDGVPVGFACQSFAALSLEPPLVLFCPTKTSRSWAAIERSGIFCVNVLAEEQQSTCARFGSRDPDKFAGIDWTESPLGSPILTGSLAHIDCSLESVHDGGDHWVAFGRVSSLSEIREERPLLFYRGQYTGIEPDKTVPAPWRDDLEAFLTTSSEDTWL.

FAD is bound by residues P42 to A46, Q48 to S49, C63 to T65, R69 to S70, and R95 to F96. Residue F160–G163 participates in NAD(+) binding.

It belongs to the non-flavoprotein flavin reductase family. As to quaternary structure, hsaAB monooxygenase consists of an oxygenase component HsaA and a reductase component HsaB.

The enzyme catalyses a reduced flavin + NAD(+) = an oxidized flavin + NADH + 2 H(+). Its pathway is lipid metabolism; steroid biosynthesis. In terms of biological role, catalyzes the reduction of free flavins (FMN or FAD) by NADH. Subsequently, the reduced flavins diffuse to the HsaA oxygenase subunit. This is Flavin-dependent monooxygenase, reductase subunit HsaB (hsaB) from Rhodococcus jostii (strain RHA1).